The following is a 291-amino-acid chain: 4-hydroxy-tetrahydrodipicolinate synthase (291 aa).

Residue T45 participates in pyruvate binding. Y133 serves as the catalytic Proton donor/acceptor. K161 functions as the Schiff-base intermediate with substrate in the catalytic mechanism. I203 provides a ligand contact to pyruvate.

This sequence belongs to the DapA family. In terms of assembly, homotetramer; dimer of dimers.

It is found in the cytoplasm. It carries out the reaction L-aspartate 4-semialdehyde + pyruvate = (2S,4S)-4-hydroxy-2,3,4,5-tetrahydrodipicolinate + H2O + H(+). Its pathway is amino-acid biosynthesis; L-lysine biosynthesis via DAP pathway; (S)-tetrahydrodipicolinate from L-aspartate: step 3/4. Catalyzes the condensation of (S)-aspartate-beta-semialdehyde [(S)-ASA] and pyruvate to 4-hydroxy-tetrahydrodipicolinate (HTPA). This Saccharophagus degradans (strain 2-40 / ATCC 43961 / DSM 17024) protein is 4-hydroxy-tetrahydrodipicolinate synthase.